Reading from the N-terminus, the 360-residue chain is Protein RecA (360 aa).

69-76 (GPESSGKT) serves as a coordination point for ATP.

It belongs to the RecA family.

It is found in the cytoplasm. Functionally, can catalyze the hydrolysis of ATP in the presence of single-stranded DNA, the ATP-dependent uptake of single-stranded DNA by duplex DNA, and the ATP-dependent hybridization of homologous single-stranded DNAs. It interacts with LexA causing its activation and leading to its autocatalytic cleavage. This Trichodesmium erythraeum (strain IMS101) protein is Protein RecA.